The sequence spans 1481 residues: MQRSPLEKASVVSKLFFSWTRPILRKGYRQRLELSDIYQIPSADSADNLSEKLEREWDRELASKKNPKLINALRRCFFWRFMFYGILLYLGEVTKAVQPLLLGRIIASYDPDNKEERSIAIYLGIGLCLLFIVRTLLLHPAIFGLHHIGMQMRIAMFSLIYKKTLKLSSRVLDKISIGQLVSLLSNNLNKFDEGLALAHFVWIVPLQVALLMGLIWELLQASAFCGLGFLIVLALFQAGLGRMMMKYRDQRAGKINERLVITSEMIENIQSVKAYCWEEAMEKMIENLRQTELKLTRKAAYVRYFNSSAFFFSGFFVVFLSVLPYALIKGIVLRKIFTTISFCIVLRMAVTRQFPWAVQTWYDSLGAINKIQDFLQKQEYKTLEYNLTTTEVVMENVTAFWEEGFGELFEKAKQNNSNRKTSNDDDSLFFSNFSLLGTPVLKDINFKIERGQLLAVAGSTGAGKTSLLMMIMGELEPSEGKIKHSGRISFCSQFSWIMPGTIKENIIFGVSYDEYRYRSVINACQLEEDISKFAEKDNIVLGEGGITLSGGQRARISLARAVYKDADLYLLDSPFGYLDVLTEKEIFESCVCKLMANKTRILVTSKMEHLKKADKILILHEGSSYFYGTFSELQNLRPDFSSKLMGYDSFDQFSAERRNSILTETLRRFSLEGDAPVSWTETKKQSFKQTGEFGEKRKNSILNPINSIRKFSIVQKTPLQMNGIEEDSDEPLERRLSLVPDSEQGEVILPRISVISTGPTLQARRRQSVLNLMTHSVNQGQSIHRKTAASTRKVSLAPQANLTELDIYSRRLSQETGLEISEEINEEDLKECFFDDMESIPAVTTWNTYLRYITVHKSLIFVLIWCLVIFLAEVAASLVVLWFLGNTPPQDKGNSTYSRNNSYAVIITRTSSYYVFYIYVGVADTLLAMGFFRGLPLVHTLITVSKILHHKMLHSVLQAPMSTLNTLKAGGILNRFSKDIAILDDLLPLTIFDFIQLLLIVIGAIAVVAVLQPYIFVATVPVIVAFIMLRAYFLQTSQQLKQLESEGRSPIFTHLVTSLKGLWTLRAFGRQPYFETLFHKALNLHTANWFLYLSTLRWFQMRIEMIFVIFFIAVTFISILTTGEGEGTVGIILTLAMNIMSTLQWAVNSSIDVDSLMRSVSRVFKFIDMPTEEGKPTRSTKPYKNGQLSKVMVIENSHVKKDDIWPSGGQMTVKDLTAKYTEGGNPILENISFSISPGQRVGLLGRTGSGKSTLLSAFLRLLNTEGEIQIDGVSWDSITLQQWRKAFGVIPQKVFIFSGTFRKNLDPYEQWSDQEIWKVADEVGLRSVIEQFPGKLDFVLVDGGCVLSHGHKQLMCLARSVLSKAKILLLDEPSAHLDPVTYQIIRRTLKQAFADCTVILCEHRIEAMLECQQFLVIEENKVRQYDSIQKLLNERSLFQQAISPSDRVKLFPHRNSSKCKTQPQIAALKEETEEEVQDTRL.

Topologically, residues 1 to 77 (MQRSPLEKAS…KLINALRRCF (77 aa)) are cytoplasmic. The chain crosses the membrane as a helical span at residues 78 to 98 (FWRFMFYGILLYLGEVTKAVQ). In terms of domain architecture, ABC transmembrane type-1 1 spans 81–365 (FMFYGILLYL…WAVQTWYDSL (285 aa)). Over 99–122 (PLLLGRIIASYDPDNKEERSIAIY) the chain is Extracellular. The helical transmembrane segment at 123–146 (LGIGLCLLFIVRTLLLHPAIFGLH) threads the bilayer. Topologically, residues 147–195 (HIGMQMRIAMFSLIYKKTLKLSSRVLDKISIGQLVSLLSNNLNKFDEGL) are cytoplasmic. The chain crosses the membrane as a helical span at residues 196-216 (ALAHFVWIVPLQVALLMGLIW). At 217–222 (ELLQAS) the chain is on the extracellular side. A helical transmembrane segment spans residues 223 to 243 (AFCGLGFLIVLALFQAGLGRM). The Cytoplasmic segment spans residues 244–298 (MMKYRDQRAGKINERLVITSEMIENIQSVKAYCWEEAMEKMIENLRQTELKLTRK). The helical transmembrane segment at 299 to 319 (AAYVRYFNSSAFFFSGFFVVF) threads the bilayer. Residues 320–339 (LSVLPYALIKGIVLRKIFTT) are Extracellular-facing. The chain crosses the membrane as a helical span at residues 340–358 (ISFCIVLRMAVTRQFPWAV). Residues 359–858 (QTWYDSLGAI…YLRYITVHKS (500 aa)) are Cytoplasmic-facing. ATP-binding positions include tryptophan 401, serine 434, 458-465 (GSTGAGKT), and glutamine 493. An ABC transporter 1 domain is found at 423–646 (NDDDSLFFSN…RPDFSSKLMG (224 aa)). The S-palmitoyl cysteine moiety is linked to residue cysteine 524. A phosphoserine mark is found at serine 549 and serine 660. The interval 654–831 (SAERRNSILT…EEINEEDLKE (178 aa)) is disordered R region. The residue at position 670 (serine 670) is a Phosphoserine; by PKA. Serine 686 is subject to Phosphoserine. Lysine 688 is covalently cross-linked (Glycyl lysine isopeptide (Lys-Gly) (interchain with G-Cter in ubiquitin)). A phosphoserine mark is found at serine 700 and serine 712. Threonine 717 is subject to Phosphothreonine. Serine 737, serine 753, serine 768, serine 790, serine 795, and serine 813 each carry phosphoserine. Residues 859-879 (LIFVLIWCLVIFLAEVAASLV) traverse the membrane as a helical segment. Residues 859-1155 (LIFVLIWCLV…AVNSSIDVDS (297 aa)) form the ABC transmembrane type-1 2 domain. Residues 880–918 (VLWFLGNTPPQDKGNSTYSRNNSYAVIITRTSSYYVFYI) are Extracellular-facing. N-linked (GlcNAc...) asparagine glycans are attached at residues asparagine 894 and asparagine 900. A discontinuously helical membrane pass occupies residues 919–939 (YVGVADTLLAMGFFRGLPLVH). The Cytoplasmic portion of the chain corresponds to 940-990 (TLITVSKILHHKMLHSVLQAPMSTLNTLKAGGILNRFSKDIAILDDLLPLT). The chain crosses the membrane as a helical span at residues 991 to 1011 (IFDFIQLLLIVIGAIAVVAVL). The Extracellular segment spans residues 1012–1013 (QP). The helical transmembrane segment at 1014-1034 (YIFVATVPVIVAFIMLRAYFL) threads the bilayer. Over 1035–1095 (QTSQQLKQLE…TANWFLYLST (61 aa)) the chain is Cytoplasmic. A helical membrane pass occupies residues 1096 to 1116 (LRWFQMRIEMIFVIFFIAVTF). Over 1117–1130 (ISILTTGEGEGTVG) the chain is Extracellular. A helical membrane pass occupies residues 1131–1151 (IILTLAMNIMSTLQWAVNSSI). The Cytoplasmic segment spans residues 1152–1481 (DVDSLMRSVS…TEEEVQDTRL (330 aa)). The ABC transporter 2 domain maps to 1211–1444 (MTVKDLTAKY…RSLFQQAISP (234 aa)). ATP contacts are provided by residues tyrosine 1220 and 1245–1252 (GRTGSGKS). Residues 1387-1481 (RTLKQAFADC…TEEEVQDTRL (95 aa)) form an interaction with GORASP2 region. Cysteine 1396 carries the S-palmitoyl cysteine lipid modification. Serine 1445 and serine 1457 each carry phosphoserine. The PDZ-binding motif lies at 1479–1481 (TRL).

Belongs to the ABC transporter superfamily. ABCC family. CFTR transporter (TC 3.A.1.202) subfamily. As to quaternary structure, monomer; does not require oligomerization for channel activity. May form oligomers in the membrane. Interacts with SLC26A3, SLC26A6 and NHERF1. Interacts with SHANK2. Interacts with MYO6. Interacts (via C-terminus) with GOPC (via PDZ domain); this promotes CFTR internalization and thereby decreases channel activity. Interacts with SLC4A7 through NHERF1. Found in a complex with MYO5B and RAB11A. Interacts with ANO1. Interacts with SLC26A8. Interacts with AHCYL1; the interaction increases CFTR activity. Interacts with CSE1L. The core-glycosylated form interacts with GORASP2 (via PDZ GRASP-type 1 domain) in respone to ER stress. Interacts with MARCHF2; the interaction leads to CFTR ubiqtuitination and degradation. Interacts with ADGRG2. N-glycosylated. Post-translationally, phosphorylated; cAMP treatment promotes phosphorylation and activates the channel. Dephosphorylation decreases the ATPase activity (in vitro). Phosphorylation at PKA sites activates the channel. Phosphorylation at PKC sites enhances the response to phosphorylation by PKA. Phosphorylated by AMPK; this inhibits channel activity. In terms of processing, ubiquitinated, leading to its degradation in the lysosome. Deubiquitination by USP10 in early endosomes enhances its endocytic recycling to the cell membrane. Ubiquitinated by RNF185 during ER stress. Ubiquitinated by MARCHF2.

The protein resides in the apical cell membrane. The protein localises to the early endosome membrane. Its subcellular location is the cell membrane. It localises to the recycling endosome membrane. It is found in the endoplasmic reticulum membrane. The protein resides in the nucleus. It carries out the reaction ATP + H2O + closed Cl(-) channel = ADP + phosphate + open Cl(-) channel.. The catalysed reaction is chloride(in) = chloride(out). It catalyses the reaction hydrogencarbonate(in) = hydrogencarbonate(out). The enzyme catalyses ATP + H2O = ADP + phosphate + H(+). Epithelial ion channel that plays an important role in the regulation of epithelial ion and water transport and fluid homeostasis. Mediates the transport of chloride ions across the cell membrane. Possesses an intrinsic ATPase activity and utilizes ATP to gate its channel; the passive flow of anions through the channel is gated by cycles of ATP binding and hydrolysis by the ATP-binding domains. The ion channel is also permeable to HCO(3)(-); selectivity depends on the extracellular chloride concentration. Exerts its function also by modulating the activity of other ion channels and transporters. Contributes to the regulation of the pH and the ion content of the epithelial fluid layer. Modulates the activity of the epithelial sodium channel (ENaC) complex, in part by regulating the cell surface expression of the ENaC complex. May regulate bicarbonate secretion and salvage in epithelial cells by regulating the transporter SLC4A7. Can inhibit the chloride channel activity of ANO1. Plays a role in the chloride and bicarbonate homeostasis during sperm epididymal maturation and capacitation. In Macaca nemestrina (Pig-tailed macaque), this protein is Cystic fibrosis transmembrane conductance regulator.